Reading from the N-terminus, the 382-residue chain is Queuine tRNA-ribosyltransferase (382 aa).

Asp89 acts as the Proton acceptor in catalysis. Substrate-binding positions include 89–93 (DSGGF), Asp143, Gln187, and Gly214. The segment at 245–251 (GVGKPED) is RNA binding. The Nucleophile role is filled by Asp264. The interval 269–273 (TRNAR) is RNA binding; important for wobble base 34 recognition. Cys302, Cys304, Cys307, and His333 together coordinate Zn(2+).

This sequence belongs to the queuine tRNA-ribosyltransferase family. As to quaternary structure, homodimer. Within each dimer, one monomer is responsible for RNA recognition and catalysis, while the other monomer binds to the replacement base PreQ1. It depends on Zn(2+) as a cofactor.

It carries out the reaction 7-aminomethyl-7-carbaguanine + guanosine(34) in tRNA = 7-aminomethyl-7-carbaguanosine(34) in tRNA + guanine. It functions in the pathway tRNA modification; tRNA-queuosine biosynthesis. Catalyzes the base-exchange of a guanine (G) residue with the queuine precursor 7-aminomethyl-7-deazaguanine (PreQ1) at position 34 (anticodon wobble position) in tRNAs with GU(N) anticodons (tRNA-Asp, -Asn, -His and -Tyr). Catalysis occurs through a double-displacement mechanism. The nucleophile active site attacks the C1' of nucleotide 34 to detach the guanine base from the RNA, forming a covalent enzyme-RNA intermediate. The proton acceptor active site deprotonates the incoming PreQ1, allowing a nucleophilic attack on the C1' of the ribose to form the product. After dissociation, two additional enzymatic reactions on the tRNA convert PreQ1 to queuine (Q), resulting in the hypermodified nucleoside queuosine (7-(((4,5-cis-dihydroxy-2-cyclopenten-1-yl)amino)methyl)-7-deazaguanosine). The chain is Queuine tRNA-ribosyltransferase from Sodalis glossinidius (strain morsitans).